Consider the following 340-residue polypeptide: Immunoglobulin-binding protein 1 (340 aa).

The UIM domain occupies 47 to 61 (LELLEKAAGMLSQLD). The tract at residues 99–203 (RLDHLQRARE…YLLHLRRWIG (105 aa)) is interaction with PPP2CA. 2 disordered regions span residues 221-242 (DKDS…PPMK) and 281-340 (LPDR…QNMG). The interaction with MID1 stretch occupies residues 226–291 (REESACQSSL…PDRGIAKPPS (66 aa)). K242 is modified (N6-acetyllysine). The segment covering 292–301 (ADFQRAAQQQ) has biased composition (low complexity). The segment covering 302-312 (EDQEQKDEENE) has biased composition (acidic residues). Basic and acidic residues predominate over residues 313–330 (EKALHRMREWDDWKDTHP).

This sequence belongs to the IGBP1/TAP42 family. As to quaternary structure, interacts with partially folded PPP2CA, but not with the fully active protein. Interacts with PPP2CB, and with PP4 and PP6. Interacts with MID1 and MID2. Interacts with ubiquitin. Post-translationally, phosphorylated. In terms of processing, monoubiquitination by MID1 triggers calpain-mediated cleavage and switches IGBP1 activity from protective to destructive.

The protein resides in the cytoplasm. Its function is as follows. Associated to surface IgM-receptor; may be involved in signal transduction. Involved in regulation of the catalytic activity of the phosphatases PP2A, PP4 and PP6 by protecting their partially folded catalytic subunits from degradative polyubiquitination until they associate with regulatory subunits. This Rattus norvegicus (Rat) protein is Immunoglobulin-binding protein 1 (Igbp1).